We begin with the raw amino-acid sequence, 554 residues long: NADH-quinone oxidoreductase subunit N 3 (554 aa).

A run of 14 helical transmembrane segments spans residues 35-55, 65-85, 105-125, 161-181, 187-207, 222-242, 275-295, 322-342, 345-365, 371-391, 398-418, 442-462, 476-496, and 525-545; these read LMPVLIIVVAAVLGILVEAFV, LFLTVVAVAGSFAAIVGLAAG, PTLFLQGTILLVAMVALFTFA, GFTTTEVFPLLLFSVAGLLVF, LLTLFIALEVFSLPLYLLCAV, YFLLGAFSSAFLLFGIALLYG, ALLLIGGAMILTGLLFKVGAV, VAAFGALLRLLYVALPGLAWD, PVMWAVAIVTMLGGAIVAITQ, LLAYSSIAHAGFILAGVIAAS, VLFYLLAYSFVTVGAFAVVTL, VAAVFAVFLLAFAGIPLTSGF, GAGALVVVGVLSSAVAAFFYI, and IAVGVAVTLVLGLAPQYFLDL.

The protein belongs to the complex I subunit 2 family. In terms of assembly, NDH-1 is composed of 14 different subunits. Subunits NuoA, H, J, K, L, M, N constitute the membrane sector of the complex.

It localises to the cell membrane. The catalysed reaction is a quinone + NADH + 5 H(+)(in) = a quinol + NAD(+) + 4 H(+)(out). Functionally, NDH-1 shuttles electrons from NADH, via FMN and iron-sulfur (Fe-S) centers, to quinones in the respiratory chain. The immediate electron acceptor for the enzyme in this species is believed to be a menaquinone. Couples the redox reaction to proton translocation (for every two electrons transferred, four hydrogen ions are translocated across the cytoplasmic membrane), and thus conserves the redox energy in a proton gradient. The polypeptide is NADH-quinone oxidoreductase subunit N 3 (Streptomyces griseus subsp. griseus (strain JCM 4626 / CBS 651.72 / NBRC 13350 / KCC S-0626 / ISP 5235)).